The primary structure comprises 301 residues: Cell division protein kinase 2 homolog CRK1 (301 aa).

Residues 5–297 form the Protein kinase domain; that stretch reads YERQEKIGEG…AADALNHPYF (293 aa). Residues 11 to 19 and Lys34 each bind ATP; that span reads IGEGTYGVV. Asp127 functions as the Proton acceptor in the catalytic mechanism. A Phosphothreonine; by CAK modification is found at Thr160.

It belongs to the protein kinase superfamily. CMGC Ser/Thr protein kinase family. CDC2/CDKX subfamily. Forms a stable but non-covalent complex with a regulatory subunit and with a cyclin.

It carries out the reaction [DNA-directed RNA polymerase] + ATP = phospho-[DNA-directed RNA polymerase] + ADP + H(+). With respect to regulation, phosphorylation at Thr-15 or Tyr-16 inactivates the enzyme, while phosphorylation at Thr-160 activates it. Its function is as follows. May be involved in some stage-specific role in the promastigote cell cycle. The chain is Cell division protein kinase 2 homolog CRK1 (CRK1) from Leishmania mexicana.